We begin with the raw amino-acid sequence, 378 residues long: Acetylornithine deacetylase (378 aa).

Histidine 76 provides a ligand contact to Zn(2+). Residue aspartate 78 is part of the active site. Aspartate 108 contributes to the Zn(2+) binding site. Residue glutamate 140 is part of the active site. Positions 141, 165, and 351 each coordinate Zn(2+).

This sequence belongs to the peptidase M20A family. ArgE subfamily. Homodimer. Zn(2+) serves as cofactor. The cofactor is Co(2+). Glutathione is required as a cofactor.

It is found in the cytoplasm. It carries out the reaction N(2)-acetyl-L-ornithine + H2O = L-ornithine + acetate. The protein operates within amino-acid biosynthesis; L-arginine biosynthesis; L-ornithine from N(2)-acetyl-L-ornithine (linear): step 1/1. Catalyzes the hydrolysis of the amide bond of N(2)-acetylated L-amino acids. Cleaves the acetyl group from N-acetyl-L-ornithine to form L-ornithine, an intermediate in L-arginine biosynthesis pathway, and a branchpoint in the synthesis of polyamines. The protein is Acetylornithine deacetylase of Vibrio cholerae serotype O1 (strain ATCC 39541 / Classical Ogawa 395 / O395).